Consider the following 195-residue polypeptide: GTP cyclohydrolase-2 (195 aa).

48–52 contributes to the GTP binding site; the sequence is RIHSE. Zn(2+) is bound by residues Cys-53, Cys-64, and Cys-66. GTP is bound by residues Gln-69, 90–92, and Thr-112; that span reads EGR. The active-site Proton acceptor is Asp-124. The active-site Nucleophile is the Arg-126. Residues Thr-147 and Lys-152 each contribute to the GTP site.

Belongs to the GTP cyclohydrolase II family. Zn(2+) is required as a cofactor.

The catalysed reaction is GTP + 4 H2O = 2,5-diamino-6-hydroxy-4-(5-phosphoribosylamino)-pyrimidine + formate + 2 phosphate + 3 H(+). It participates in cofactor biosynthesis; riboflavin biosynthesis; 5-amino-6-(D-ribitylamino)uracil from GTP: step 1/4. In terms of biological role, catalyzes the conversion of GTP to 2,5-diamino-6-ribosylamino-4(3H)-pyrimidinone 5'-phosphate (DARP), formate and pyrophosphate. The polypeptide is GTP cyclohydrolase-2 (Campylobacter fetus subsp. fetus (strain 82-40)).